Consider the following 1366-residue polypeptide: DNA-directed RNA polymerase subunit beta (1366 aa).

Belongs to the RNA polymerase beta chain family. As to quaternary structure, the RNAP catalytic core consists of 2 alpha, 1 beta, 1 beta' and 1 omega subunit. When a sigma factor is associated with the core the holoenzyme is formed, which can initiate transcription.

It catalyses the reaction RNA(n) + a ribonucleoside 5'-triphosphate = RNA(n+1) + diphosphate. In terms of biological role, DNA-dependent RNA polymerase catalyzes the transcription of DNA into RNA using the four ribonucleoside triphosphates as substrates. The polypeptide is DNA-directed RNA polymerase subunit beta (Polynucleobacter necessarius subsp. necessarius (strain STIR1)).